A 384-amino-acid polypeptide reads, in one-letter code: Putative glutamate--cysteine ligase 2-2 (384 aa).

It belongs to the glutamate--cysteine ligase type 2 family. YbdK subfamily.

It catalyses the reaction L-cysteine + L-glutamate + ATP = gamma-L-glutamyl-L-cysteine + ADP + phosphate + H(+). Its function is as follows. ATP-dependent carboxylate-amine ligase which exhibits weak glutamate--cysteine ligase activity. This is Putative glutamate--cysteine ligase 2-2 from Rubrobacter xylanophilus (strain DSM 9941 / JCM 11954 / NBRC 16129 / PRD-1).